A 433-amino-acid polypeptide reads, in one-letter code: MASNSWNASSSPGEGREDGQDGMDKSLDNDAEGVWSPDIEQSFQEALAIYPPCGRRKIILSDEGKMYGRNELIARYIKLRTGKTRTKKQVSSHLQVLARREISGDSSKLKAMNLDQVSKDKAFQSMASMSSAQIVSASVLQNKLSPPPPLPQAVFSAAPRFWSGPIPGQPGPSQDIKPFAQPAYPIQPPMPPSLASYEPLAPLPPAASAVPVWQDRTIASAKLRLLEYSAFMEVPRDAETYSKHLFVHIGQTNPSYSDPLLEAMDIRQIYDKFPEKKGGLKELYERGPQNSFFLLKFWADLNSTIQDGPGTFYGVSSQYSSAENMTITVSTKVCSFGKQVVEKVETEYARLENSRFVYRIHRSPMCEYMINFIHKLKHLPEKYMMNSVLENFTILQVVTNRDTQETLLCIAFVFEVSTSEHGAQHHVYKLVKD.

Residues 1 to 12 (MASNSWNASSSP) are compositionally biased toward polar residues. A disordered region spans residues 1-35 (MASNSWNASSSPGEGREDGQDGMDKSLDNDAEGVW). A compositionally biased stretch (basic and acidic residues) spans 14–28 (EGREDGQDGMDKSLD). The segment at residues 28–104 (DNDAEGVWSP…QVLARREISG (77 aa)) is a DNA-binding region (TEA). The tract at residues 171 to 433 (GPSQDIKPFA…QHHVYKLVKD (263 aa)) is transcriptional activation.

As to expression, high levels in cardiac muscle, low in skeletal muscle. Intermediate levels in gizzard and lung, low levels in kidney.

The protein resides in the nucleus. Transcription factor which plays a key role in the Hippo signaling pathway, a pathway involved in organ size control and tumor suppression by restricting proliferation and promoting apoptosis. The core of this pathway is composed of a kinase cascade wherein MST1/MST2, in complex with its regulatory protein SAV1, phosphorylates and activates LATS1/2 in complex with its regulatory protein MOB1, which in turn phosphorylates and inactivates YAP1 oncoprotein and WWTR1/TAZ. This chain is Transcriptional enhancer factor TEF-5 (TEAD3), found in Gallus gallus (Chicken).